The chain runs to 503 residues: Lysine--tRNA ligase (503 aa).

2 residues coordinate Mg(2+): glutamate 414 and glutamate 421.

This sequence belongs to the class-II aminoacyl-tRNA synthetase family. In terms of assembly, homodimer. It depends on Mg(2+) as a cofactor.

Its subcellular location is the cytoplasm. The enzyme catalyses tRNA(Lys) + L-lysine + ATP = L-lysyl-tRNA(Lys) + AMP + diphosphate. The sequence is that of Lysine--tRNA ligase from Laribacter hongkongensis (strain HLHK9).